A 403-amino-acid chain; its full sequence is Phosphopentomutase (403 aa).

Residues D13, D298, H303, D339, H340, and H351 each contribute to the Mn(2+) site.

It belongs to the phosphopentomutase family. It depends on Mn(2+) as a cofactor.

Its subcellular location is the cytoplasm. The enzyme catalyses 2-deoxy-alpha-D-ribose 1-phosphate = 2-deoxy-D-ribose 5-phosphate. The catalysed reaction is alpha-D-ribose 1-phosphate = D-ribose 5-phosphate. It functions in the pathway carbohydrate degradation; 2-deoxy-D-ribose 1-phosphate degradation; D-glyceraldehyde 3-phosphate and acetaldehyde from 2-deoxy-alpha-D-ribose 1-phosphate: step 1/2. Its function is as follows. Isomerase that catalyzes the conversion of deoxy-ribose 1-phosphate (dRib-1-P) and ribose 1-phosphate (Rib-1-P) to deoxy-ribose 5-phosphate (dRib-5-P) and ribose 5-phosphate (Rib-5-P), respectively. This Streptococcus pneumoniae (strain Hungary19A-6) protein is Phosphopentomutase.